Reading from the N-terminus, the 189-residue chain is Auxin-responsive protein IAA6 (189 aa).

Positions 13 to 17 (LRLGL) match the EAR-like (transcriptional repression) motif. The PB1 domain occupies 93–178 (IGYVKVSMDG…SCKRLRIVKR (86 aa)).

This sequence belongs to the Aux/IAA family. As to quaternary structure, homodimers and heterodimers. Interacts with TPL. In terms of tissue distribution, highly expressed in stems and flowers.

It localises to the nucleus. Aux/IAA proteins are short-lived transcriptional factors that function as repressors of early auxin response genes at low auxin concentrations. Repression is thought to result from the interaction with auxin response factors (ARFs), proteins that bind to the auxin-responsive promoter element (AuxRE). Formation of heterodimers with ARF proteins may alter their ability to modulate early auxin response genes expression. The chain is Auxin-responsive protein IAA6 (IAA6) from Arabidopsis thaliana (Mouse-ear cress).